A 307-amino-acid polypeptide reads, in one-letter code: 4-diphosphocytidyl-2-C-methyl-D-erythritol kinase (307 aa).

Residue Lys-9 is part of the active site. ATP is bound at residue 94 to 104 (PIGAGLAGGSS). Asp-136 is a catalytic residue.

This sequence belongs to the GHMP kinase family. IspE subfamily.

The enzyme catalyses 4-CDP-2-C-methyl-D-erythritol + ATP = 4-CDP-2-C-methyl-D-erythritol 2-phosphate + ADP + H(+). It functions in the pathway isoprenoid biosynthesis; isopentenyl diphosphate biosynthesis via DXP pathway; isopentenyl diphosphate from 1-deoxy-D-xylulose 5-phosphate: step 3/6. Its function is as follows. Catalyzes the phosphorylation of the position 2 hydroxy group of 4-diphosphocytidyl-2C-methyl-D-erythritol. In Synechococcus sp. (strain CC9605), this protein is 4-diphosphocytidyl-2-C-methyl-D-erythritol kinase.